Reading from the N-terminus, the 491-residue chain is Feruloyl-CoA synthase (491 aa).

Threonine 154 contacts Mg(2+). The ATP site is built by alanine 199, glycine 291, and threonine 295. Residue glutamate 296 participates in Mg(2+) binding. Residues aspartate 374 and lysine 391 each contribute to the ATP site.

This sequence belongs to the ATP-dependent AMP-binding enzyme family. The cofactor is Mg(2+).

It carries out the reaction (E)-ferulate + ATP + CoA = (E)-feruloyl-CoA + AMP + diphosphate. Functionally, catalyzes the formation of (E)-feruloyl-CoA, AMP and diphosphate from (E)-ferulate, CoA and ATP. Involved in the degradation pathway of lignin-derived aromatic compounds of plant cell walls. Catalyzes the first enzymatic step in the conversion of ferulic acid into high value compound vanillin. The chain is Feruloyl-CoA synthase from Amycolatopsis sp.